The sequence spans 337 residues: Calcium-binding protein 39-like (337 aa).

This sequence belongs to the Mo25 family. Component of a trimeric complex composed of STK11/LKB1, STRAD (STRADA or STRADB) and CAB39/MO25 (CAB39/MO25alpha or CAB39L/MO25beta): the complex tethers STK11/LKB1 in the cytoplasm and stimulates its catalytic activity.

Functionally, component of a complex that binds and activates STK11/LKB1. In the complex, required to stabilize the interaction between CAB39/MO25 (CAB39/MO25alpha or CAB39L/MO25beta) and STK11/LKB1. In Homo sapiens (Human), this protein is Calcium-binding protein 39-like (CAB39L).